A 509-amino-acid chain; its full sequence is Maturase K (509 aa).

The protein belongs to the intron maturase 2 family. MatK subfamily.

The protein localises to the plastid. It localises to the chloroplast. Its function is as follows. Usually encoded in the trnK tRNA gene intron. Probably assists in splicing its own and other chloroplast group II introns. The polypeptide is Maturase K (Arpophyllum giganteum (Hyacinth orchid)).